We begin with the raw amino-acid sequence, 595 residues long: Phenylalanine--tRNA ligase beta subunit (595 aa).

Residues 86–90 (KLSKP) are 3'-CCA residue in tRNA. Residues 292-370 (FNDRIMDVSI…VGYGFNNLPK (79 aa)) enclose the B5 domain. Residues Asp-348, Asp-354, Glu-357, and Asp-358 each coordinate Mg(2+).

This sequence belongs to the phenylalanyl-tRNA synthetase beta subunit family. Type 2 subfamily. Tetramer of two alpha and two beta subunits. Mg(2+) serves as cofactor.

Its subcellular location is the cytoplasm. The enzyme catalyses tRNA(Phe) + L-phenylalanine + ATP = L-phenylalanyl-tRNA(Phe) + AMP + diphosphate + H(+). The chain is Phenylalanine--tRNA ligase beta subunit (FRS1) from Saccharomyces cerevisiae (strain ATCC 204508 / S288c) (Baker's yeast).